Reading from the N-terminus, the 415-residue chain is Ammonium transporter Rh type A (415 aa).

At 1–2 (MR) the chain is on the cytoplasmic side. The chain crosses the membrane as a helical span at residues 3–23 (FIFPTIAVLLEASMIVLFGFF). Topologically, residues 24 to 51 (VKYETEQNAIQQPNSTNSTKVDRSLELY) are extracellular. N-linked (GlcNAc...) asparagine glycans are attached at residues Asn-37 and Asn-40. The helical transmembrane segment at 52–72 (PLFQDVHVMIFVGFGFLMTFL) threads the bilayer. Over 73 to 76 (KKYG) the chain is Cytoplasmic. The helical transmembrane segment at 77–97 (FSSVGINLLIAALGLQWGTFV) threads the bilayer. Topologically, residues 98 to 115 (QGMVHRHGQTIYIGIKNM) are extracellular. A helical transmembrane segment spans residues 116–136 (INADFSTATVLISFGAVLGKI). At 137–142 (SPTQML) the chain is on the cytoplasmic side. The helical transmembrane segment at 143–163 (IMTIIEITVFAGNEYVVGEIF) threads the bilayer. The Extracellular segment spans residues 164 to 167 (QASD). A helical membrane pass occupies residues 168–188 (IGASMTIHAFGAYFGLAVAGV). Topologically, residues 189–208 (LYRTGLRKGHEKEESEYHSD) are cytoplasmic. Residues 209 to 229 (LFAMIGTLFLWMFWPSFNSAI) traverse the membrane as a helical segment. Residues 230–236 (AETAEEQ) are Extracellular-facing. Residues 237–257 (YLAIINTYLSLVACVLTAYAM) form a helical membrane-spanning segment. Residues 258-268 (SSLVGHRGKLD) are Cytoplasmic-facing. Residues 269–287 (MVHIQNATLAGGVAVGTCA) traverse the membrane as a helical segment. Over 288-290 (DMK) the chain is Extracellular. The chain crosses the membrane as a helical span at residues 291–311 (IHPYGSLIIGSIAGMVSVLGF). Residues 312-332 (RFLTPCLTAKLRIHDTCGVHN) lie on the Cytoplasmic side of the membrane. A helical transmembrane segment spans residues 333-353 (LHGLPGVVGGLSSIVAILLGV). The Extracellular segment spans residues 354–363 (STASSMTMQA). The helical transmembrane segment at 364-384 (AALGSSIGSAIAGGLITGLIL) threads the bilayer. The Cytoplasmic portion of the chain corresponds to 385–415 (RFIVRGQPSKDNFFDDSVYWEVPKEKELDNV).

The protein belongs to the ammonium transporter (TC 2.A.49) family. Rh subfamily. Homodimer. Heterotrimer; a RHCE monomer interacts with a RHAG homodimer. Component of the ankyrin-1 complex in the erythrocyte, composed of ANK1, RHCE, RHAG, SLC4A1, EPB42, GYPA, GYPB and AQP1. Interacts with GYPB (via the N-terminal); this interaction bridges the (RHAG)2(RHCE) heterotrimer with the SLC4A1 Band 3 I dimer complexed with GYPA. Glycosylated.

The protein resides in the membrane. It carries out the reaction methylamine(out) = methylamine(in). It catalyses the reaction NH4(+)(in) = NH4(+)(out). The enzyme catalyses CO2(out) = CO2(in). Functionally, component of the ankyrin-1 complex, a multiprotein complex involved in the stability and shape of the erythrocyte membrane. Heterotrimer with RHCE (RHAG)2(RHCE), that transports ammonium and its related derivative methylammonium, in both neutral and ionic forms, across the erythrocyte membrane. The transport of NH4(+) is electrogenic and masks the NH3 transport. Also, may act as a CO2 channel. Moreover in erythrocyte, regulates RHD membrane expression and is associated with rhesus blood group antigen expression. This Canis lupus familiaris (Dog) protein is Ammonium transporter Rh type A.